We begin with the raw amino-acid sequence, 726 residues long: Pyrroloquinoline quinone-dependent pyranose dehydrogenase (726 aa).

An N-terminal signal peptide occupies residues Met-1–Ala-18. Residues Met-83 and Tyr-108 each coordinate heme b. A disulfide bond links Cys-138 and Cys-141. Asn-140 carries N-linked (GlcNAc...) asparagine glycosylation. Heme b-binding residues include Arg-181 and His-182. Residues Pro-211–Val-242 are disordered. Positions Thr-219–Ser-238 are enriched in pro residues. Cys-244 and Cys-302 are joined by a disulfide. Residues Arg-273, His-363, Arg-430, and Asn-431 each contribute to the pyrroloquinoline quinone site. The Ca(2+) site is built by Ser-449 and Asp-451. Cys-492 and Cys-525 are joined by a disulfide. His-539 lines the pyrroloquinoline quinone pocket. A glycan (N-linked (GlcNAc...) asparagine) is linked at Asn-551. Pyrroloquinoline quinone is bound by residues His-560, Trp-563, and Asn-564. Residues Cys-611 and Cys-619 are joined by a disulfide bond. Arg-621 serves as a coordination point for pyrroloquinoline quinone. The segment covering Ile-659–Gln-678 has biased composition (pro residues). The disordered stretch occupies residues Ile-659–Ser-689. Over residues Pro-679 to Ser-689 the composition is skewed to low complexity. Positions Ala-688 to Val-724 constitute a CBM1 domain.

Belongs to the sugar dehydrogenase AA12 family. Ca(2+) serves as cofactor. It depends on pyrroloquinoline quinone as a cofactor. Requires heme b as cofactor.

It is found in the secreted. In terms of biological role, pyrroloquinoline quinone (PPQ)-dependent oxidoreductase that catalyzes the oxidation of various sugars including L-galactose, L-gulose, D-talose, D-arabinose, D-lyxose, L-fucose and D-glucosone. Shows significant activity toward the reverse-chair conformation of pyranoses. Shows little or no activity toward abundant sugars such as D-glucose, D-fructose, cellobiose, as well L-xylose and L-glucose. This enzyme is able to direct electrical communication with electrodes, without artificial electron mediators, thus allowing direct electron transfer (DET)-type bioelectrocatalysis. Exhibits binding affinity for insoluble cellulose. PDH does not oxidize cello-oligosaccharides but is able to activate the C-1-oxidizing Neurospora crassa LPMO9F and the C-4-oxidizing Neurospora crassa LPMO9C thanks to the electron-tranfer activity of the cytochrome domain and the localization of PDH in the vicinity of the LPMO substrates by the CBM1 domain. The protein is Pyrroloquinoline quinone-dependent pyranose dehydrogenase of Coprinopsis cinerea (strain Okayama-7 / 130 / ATCC MYA-4618 / FGSC 9003) (Inky cap fungus).